Reading from the N-terminus, the 230-residue chain is Protein RESPONSE TO ABA AND SALT 1 (230 aa).

The DOG1 domain maps to 7 to 230 (SQSFTIFVDG…RLRDRDQERA (224 aa)).

Functionally, negative regulator of salt (NaCl) tolerance probably by enhancing abscisic acid (ABA) sensitivity. The protein is Protein RESPONSE TO ABA AND SALT 1 of Arabidopsis thaliana (Mouse-ear cress).